Consider the following 258-residue polypeptide: Deoxyribose-phosphate aldolase 2 (258 aa).

Residue D102 is the Proton donor/acceptor of the active site. The active-site Schiff-base intermediate with acetaldehyde is K165. The active-site Proton donor/acceptor is the K199.

Belongs to the DeoC/FbaB aldolase family. DeoC type 2 subfamily.

Its subcellular location is the cytoplasm. The catalysed reaction is 2-deoxy-D-ribose 5-phosphate = D-glyceraldehyde 3-phosphate + acetaldehyde. It participates in carbohydrate degradation; 2-deoxy-D-ribose 1-phosphate degradation; D-glyceraldehyde 3-phosphate and acetaldehyde from 2-deoxy-alpha-D-ribose 1-phosphate: step 2/2. Catalyzes a reversible aldol reaction between acetaldehyde and D-glyceraldehyde 3-phosphate to generate 2-deoxy-D-ribose 5-phosphate. The protein is Deoxyribose-phosphate aldolase 2 (deoC2) of Vibrio vulnificus (strain YJ016).